A 163-amino-acid polypeptide reads, in one-letter code: Cyanate hydratase (163 aa).

Active-site residues include arginine 103, glutamate 106, and serine 129.

It belongs to the cyanase family.

It carries out the reaction cyanate + hydrogencarbonate + 3 H(+) = NH4(+) + 2 CO2. Catalyzes the reaction of cyanate with bicarbonate to produce ammonia and carbon dioxide. The protein is Cyanate hydratase of Ajellomyces capsulatus (strain G186AR / H82 / ATCC MYA-2454 / RMSCC 2432) (Darling's disease fungus).